The chain runs to 363 residues: tRNA dimethylallyltransferase (363 aa).

The segment at 1–55 is unknown insert; that stretch reads MLACNDDTSLYLLVKQVTKKEIYSNDLENGNVKRGASMQSLYLIGDPKCCRNNSS. Residue 65–72 participates in ATP binding; sequence GPTASGKS. 67–72 contacts substrate; the sequence is TASGKS. Interaction with substrate tRNA regions lie at residues 90 to 93 and 214 to 218; these read DSMQ and QRLIR.

The protein belongs to the IPP transferase family. Monomer. Mg(2+) serves as cofactor.

It carries out the reaction adenosine(37) in tRNA + dimethylallyl diphosphate = N(6)-dimethylallyladenosine(37) in tRNA + diphosphate. Catalyzes the transfer of a dimethylallyl group onto the adenine at position 37 in tRNAs that read codons beginning with uridine, leading to the formation of N6-(dimethylallyl)adenosine (i(6)A). This is tRNA dimethylallyltransferase from Rickettsia conorii (strain ATCC VR-613 / Malish 7).